Reading from the N-terminus, the 147-residue chain is Small ribosomal subunit protein bS16m (147 aa).

It belongs to the bacterial ribosomal protein bS16 family. In terms of assembly, component of the mitochondrial ribosome small subunit (28S) which comprises a 12S rRNA and about 30 distinct proteins.

Its subcellular location is the mitochondrion. The protein is Small ribosomal subunit protein bS16m (mrps-16) of Caenorhabditis elegans.